Consider the following 343-residue polypeptide: Tribbles homolog 2 (343 aa).

A disordered region spans residues 25–50 (EELSSIRSAEPSQSFSPNLGSPSPPE). Polar residues predominate over residues 29 to 45 (SIRSAEPSQSFSPNLGS). A Protein kinase domain is found at 61–308 (IGKYLLLEPL…SQEILDHPWF (248 aa)).

It belongs to the protein kinase superfamily. CAMK Ser/Thr protein kinase family. Tribbles subfamily. As to expression, expressed in granulosa cells of the dominant follicles of the ovary and down-regulated in ovulatory follicles.

The protein resides in the cytoplasm. Its subcellular location is the cytoskeleton. Functionally, interacts with MAPK kinases and regulates activation of MAP kinases. Does not display kinase activity. This Bos taurus (Bovine) protein is Tribbles homolog 2.